The following is a 620-amino-acid chain: Acetylcholinesterase 1 (620 aa).

The signal sequence occupies residues 1–31 (MRNSLLFFIFLPSTILAVDLIHLHDGSPLFG). Asn-74 carries an N-linked (GlcNAc...) asparagine glycan. Cys-82 and Cys-109 form a disulfide bridge. Catalysis depends on Ser-216, which acts as the Acyl-ester intermediate. Cysteines 270 and 286 form a disulfide. Asn-272 carries N-linked (GlcNAc...) asparagine glycosylation. Catalysis depends on charge relay system residues Glu-346 and His-468. A disulfide bond links Cys-430 and Cys-558. Residues Asn-486 and Asn-536 are each glycosylated (N-linked (GlcNAc...) asparagine).

The protein belongs to the type-B carboxylesterase/lipase family. As to quaternary structure, oligomer composed of disulfide-linked homodimers.

Its subcellular location is the synapse. The protein resides in the secreted. It is found in the cell membrane. It catalyses the reaction acetylcholine + H2O = choline + acetate + H(+). Functionally, rapidly hydrolyzes acetylcholine and releases choline into the synapse. It can hydrolyze propionylcholine and butyrylthiocholine in vitro. This chain is Acetylcholinesterase 1 (ace-1), found in Caenorhabditis elegans.